Reading from the N-terminus, the 491-residue chain is Cyclin-A1-3 (491 aa).

Residues 1–21 (MSSSLASRRSSSSSAAKRPAA) show a composition bias toward low complexity. 2 disordered regions span residues 1 to 32 (MSSS…AAGA) and 69 to 106 (SLAS…QKES). A compositionally biased stretch (polar residues) spans 75 to 91 (NVGTNRVSAVKSASTKP).

This sequence belongs to the cyclin family. Cyclin AB subfamily.

The chain is Cyclin-A1-3 (CYCA1-3) from Oryza sativa subsp. japonica (Rice).